A 300-amino-acid polypeptide reads, in one-letter code: Arginine/serine-rich protein 1 (300 aa).

The tract at residues methionine 1 to tyrosine 142 is disordered. The residue at position 17 (serine 17) is a Phosphoserine. Residues serine 23 to serine 36 show a composition bias toward low complexity. The segment covering serine 37 to arginine 104 has biased composition (basic residues). Over residues tyrosine 105 to arginine 115 the composition is skewed to basic and acidic residues. The segment covering arginine 116–arginine 125 has biased composition (low complexity). Residues serine 120 and serine 122 each carry the phosphoserine modification. A compositionally biased stretch (basic residues) spans serine 126–serine 141. Arginine 147 carries the post-translational modification Omega-N-methylarginine. A disordered region spans residues glutamine 222–valine 300. A compositionally biased stretch (basic and acidic residues) spans proline 268–valine 277. Serine 284 is modified (phosphoserine).

The protein belongs to the RSRP family. Post-translationally, phosphorylated. Phosphorylation at Ser-120 and Ser-122 mediates the interaction with spliceosome proteins.

Its subcellular location is the nucleus. Probably acts as a spliceosomal factor that contributes to spliceosome assembly and regulates the isoform switching of proteins such as PARP6. In Rattus norvegicus (Rat), this protein is Arginine/serine-rich protein 1 (Rsrp1).